The following is a 217-amino-acid chain: Polyadenylate-binding protein 3 (217 aa).

A disordered region spans residues 1–28 (MEEEEHEVYGGEIPEVGDTDVPDPDIDM). Acidic residues predominate over residues 15–28 (EVGDTDVPDPDIDM). A coiled-coil region spans residues 30–71 (AADEDAVTELAEMKRRLKEMEEEAAALREMQAKVEKEMGATQ). Residues 75–216 (SMAANQEGKE…FRRPMRYMPY (142 aa)) form a necessary for homooligomerization region. In terms of domain architecture, RRM spans 89–165 (RSVYVGNVDY…RQLKVSPKRT (77 aa)). A Nuclear localization signal motif is present at residues 162–169 (PKRTNVPG).

Monomer and homooligomer. Binds RNA as a monomer and oligomerizes when bound to poly(A). Forms a complex with cleavage and polyadenylation specificity factor (CPSF) subunits PAPS4, PABN1, PABN2, CSTF50 and FIPS5. Interacts with CSP3.

It is found in the nucleus speckle. The protein localises to the cytoplasm. Involved in the 3'-end formation of mRNA precursors (pre-mRNA) by the addition of a poly(A) tail of 200-250 nt to the upstream cleavage product. Stimulates poly(A) polymerase (PAPOLA) conferring processivity on the poly(A) tail elongation reaction and also controls the poly(A) tail length. Increases the affinity of poly(A) polymerase for RNA. Binds to poly(A) and to poly(G) with high affinity. May protect the poly(A) tail from degradation. This is Polyadenylate-binding protein 3 from Arabidopsis thaliana (Mouse-ear cress).